The chain runs to 83 residues: Disintegrin bitistatin (83 aa).

Residues 2–83 enclose the Disintegrin domain; the sequence is PPVCGNKILE…GKSSDCPWNH (82 aa). Intrachain disulfides connect cysteine 5/cysteine 24, cysteine 5/cysteine 34, cysteine 16/cysteine 29, cysteine 16/cysteine 34, cysteine 18/cysteine 24, cysteine 18/cysteine 29, cysteine 28/cysteine 51, cysteine 42/cysteine 48, cysteine 47/cysteine 72, and cysteine 60/cysteine 79. The Cell attachment site motif lies at 64–66; sequence RGD.

The protein belongs to the venom metalloproteinase (M12B) family. P-II subfamily. P-IIa sub-subfamily. Monomer. Exists in 3 forms in the venom. The forms A, B, and C are present at 53%, 32% and 15%. The forms A and B differ by their disulfide bond pattern in the N-terminal part. No information is known about form C. As to expression, expressed by the venom gland.

The protein resides in the secreted. In terms of biological role, inhibits fibrinogen interaction with platelets. Acts by binding to alpha-IIb/beta-3 (ITGA2B/ITGB3) on the platelet surface and inhibits aggregation induced by ADP, thrombin, platelet-activating factor and collagen. The chain is Disintegrin bitistatin from Bitis arietans (African puff adder).